We begin with the raw amino-acid sequence, 354 residues long: Protein-glutamate methylesterase/protein-glutamine glutaminase 2 (354 aa).

The Response regulatory domain occupies 5–122 (RVLIVDDSAL…SLKIKEVAEE (118 aa)). 4-aspartylphosphate is present on Asp-56. Positions 159–354 (PDTSFKKLIL…IADRIVELVR (196 aa)) constitute a CheB-type methylesterase domain. Residues Ser-172, His-199, and Asp-298 contribute to the active site.

It belongs to the CheB family. In terms of processing, phosphorylated by CheA. Phosphorylation of the N-terminal regulatory domain activates the methylesterase activity.

Its subcellular location is the cytoplasm. It catalyses the reaction [protein]-L-glutamate 5-O-methyl ester + H2O = L-glutamyl-[protein] + methanol + H(+). The catalysed reaction is L-glutaminyl-[protein] + H2O = L-glutamyl-[protein] + NH4(+). Functionally, involved in chemotaxis. Part of a chemotaxis signal transduction system that modulates chemotaxis in response to various stimuli. Catalyzes the demethylation of specific methylglutamate residues introduced into the chemoreceptors (methyl-accepting chemotaxis proteins or MCP) by CheR. Also mediates the irreversible deamidation of specific glutamine residues to glutamic acid. The sequence is that of Protein-glutamate methylesterase/protein-glutamine glutaminase 2 from Carboxydothermus hydrogenoformans (strain ATCC BAA-161 / DSM 6008 / Z-2901).